The sequence spans 155 residues: Ribosomal RNA large subunit methyltransferase H (155 aa).

S-adenosyl-L-methionine contacts are provided by residues Leu73, Gly104, and 123-128 (LSPLTL).

This sequence belongs to the RNA methyltransferase RlmH family. As to quaternary structure, homodimer.

The protein localises to the cytoplasm. It carries out the reaction pseudouridine(1915) in 23S rRNA + S-adenosyl-L-methionine = N(3)-methylpseudouridine(1915) in 23S rRNA + S-adenosyl-L-homocysteine + H(+). Functionally, specifically methylates the pseudouridine at position 1915 (m3Psi1915) in 23S rRNA. The protein is Ribosomal RNA large subunit methyltransferase H of Pseudomonas putida (strain GB-1).